The sequence spans 143 residues: Anti-sigma F factor (143 aa).

It belongs to the anti-sigma-factor family.

The enzyme catalyses L-seryl-[protein] + ATP = O-phospho-L-seryl-[protein] + ADP + H(+). It carries out the reaction L-threonyl-[protein] + ATP = O-phospho-L-threonyl-[protein] + ADP + H(+). Its function is as follows. Binds to sigma F and blocks its ability to form an RNA polymerase holoenzyme (E-sigma F). Phosphorylates SpoIIAA on a serine residue. This phosphorylation may enable SpoIIAA to act as an anti-anti-sigma factor that counteracts SpoIIAB and thus releases sigma F from inhibition. The polypeptide is Anti-sigma F factor (Clostridium botulinum (strain Eklund 17B / Type B)).